Consider the following 290-residue polypeptide: Small ribosomal subunit biogenesis GTPase RsgA (290 aa).

Residues 62 to 219 enclose the CP-type G domain; the sequence is RTCLKRPAVA…VADTPGFSRL (158 aa). Residues 111-114 and 161-169 contribute to the GTP site; these read NKAD and GPSGVGKSS. Zn(2+)-binding residues include C243, C248, H250, and C256.

It belongs to the TRAFAC class YlqF/YawG GTPase family. RsgA subfamily. As to quaternary structure, monomer. Associates with 30S ribosomal subunit, binds 16S rRNA. It depends on Zn(2+) as a cofactor.

It is found in the cytoplasm. In terms of biological role, one of several proteins that assist in the late maturation steps of the functional core of the 30S ribosomal subunit. Helps release RbfA from mature subunits. May play a role in the assembly of ribosomal proteins into the subunit. Circularly permuted GTPase that catalyzes slow GTP hydrolysis, GTPase activity is stimulated by the 30S ribosomal subunit. The protein is Small ribosomal subunit biogenesis GTPase RsgA of Moorella thermoacetica (strain ATCC 39073 / JCM 9320).